Consider the following 389-residue polypeptide: MDTFLFTSESVNEGHPDKLCDQVSDAILDACLEQDPESKVACETCSKTNMVMVFGEITTKAKVDYEKIVRDTCRGIGFVSADVGLDADNCKVLVNIEQQSPDIAQGVHGHLSKKPEEIGAGDQGHMFGYATDETPELMPLTHVLATKLGAKLTEVRKNKTCPWLRPDGKTQVTVEYRNEGGAMVPIRVHTVLISTQHDETVTNDQIAKELREHVIKPVIPSKFMDDKTIFHLNPSGRFVIGGPHGDAGLTGRKIIIDTYGGWGAHGGGAFSGKDPTKVDRSGAYIVRQAAKSVVASGLARRCLVQVSYAIGVPEPLSVFVDTYKTGKIPDKDILDLIKENFDFRPGMIAINLDLKRGGNFRFQKTAAYGHFGRDDPDFTWETVKLLKKA.

Mg(2+) is bound at residue Glu-9. His-15 lines the ATP pocket. A K(+)-binding site is contributed by Glu-43. Residues Glu-56 and Gln-99 each contribute to the L-methionine site. ATP is bound by residues 167–169 (DGK), 235–238 (SGRF), Asp-246, 252–253 (RK), Ala-269, Lys-273, and Lys-277. Position 246 (Asp-246) interacts with L-methionine. Lys-277 contacts L-methionine.

It belongs to the AdoMet synthase family. As to quaternary structure, homotetramer. The cofactor is Mn(2+). It depends on Mg(2+) as a cofactor. Requires Co(2+) as cofactor. K(+) serves as cofactor.

The protein resides in the cytoplasm. It carries out the reaction L-methionine + ATP + H2O = S-adenosyl-L-methionine + phosphate + diphosphate. Its pathway is amino-acid biosynthesis; S-adenosyl-L-methionine biosynthesis; S-adenosyl-L-methionine from L-methionine: step 1/1. In terms of biological role, catalyzes the formation of S-adenosylmethionine from methionine and ATP. The reaction comprises two steps that are both catalyzed by the same enzyme: formation of S-adenosylmethionine (AdoMet) and triphosphate, and subsequent hydrolysis of the triphosphate. The polypeptide is S-adenosylmethionine synthase 3 (METK3) (Vitis vinifera (Grape)).